A 258-amino-acid polypeptide reads, in one-letter code: UPF0246 protein CGSHiEE_07045 (258 aa).

This sequence belongs to the UPF0246 family.

The polypeptide is UPF0246 protein CGSHiEE_07045 (Haemophilus influenzae (strain PittEE)).